A 199-amino-acid polypeptide reads, in one-letter code: Recombination protein RecR (199 aa).

A C4-type zinc finger spans residues 58–73 (CQRCNNFSEEAVCQRC). Positions 81-176 (ATLCVVEMPA…KVSRISRGVP (96 aa)) constitute a Toprim domain.

The protein belongs to the RecR family.

May play a role in DNA repair. It seems to be involved in an RecBC-independent recombinational process of DNA repair. It may act with RecF and RecO. This chain is Recombination protein RecR, found in Azoarcus sp. (strain BH72).